The sequence spans 107 residues: Integration host factor subunit beta (107 aa).

The interval 55–107 (RRPARVGRNPKSGEKVQVPEKHVPHFKPGKELRERVDGRAGEPLKNDEPEDAQ) is disordered. A compositionally biased stretch (basic and acidic residues) spans 65-101 (KSGEKVQVPEKHVPHFKPGKELRERVDGRAGEPLKND).

This sequence belongs to the bacterial histone-like protein family. In terms of assembly, heterodimer of an alpha and a beta chain.

This protein is one of the two subunits of integration host factor, a specific DNA-binding protein that functions in genetic recombination as well as in transcriptional and translational control. The polypeptide is Integration host factor subunit beta (Burkholderia pseudomallei (strain K96243)).